A 207-amino-acid chain; its full sequence is Cytochrome c oxidase subunit 3 (207 aa).

5 consecutive transmembrane segments (helical) span residues 28–48 (FLGF…LFAT), 70–90 (VVFM…YAIY), 102–122 (LWFG…IYEF), 144–164 (LVGT…TLMI), and 186–206 (WHFI…MGMV).

Belongs to the cytochrome c oxidase subunit 3 family.

Its subcellular location is the cell membrane. The catalysed reaction is 4 Fe(II)-[cytochrome c] + O2 + 8 H(+)(in) = 4 Fe(III)-[cytochrome c] + 2 H2O + 4 H(+)(out). This chain is Cytochrome c oxidase subunit 3 (ctaE), found in Bacillus sp. (strain PS3).